The chain runs to 432 residues: Tyrosine-protein phosphatase non-receptor type 1 (432 aa).

At Met1 the chain carries N-acetylmethionine. The 275-residue stretch at 3–277 (MEKEFEQIDK…RFSYLAVIEG (275 aa)) folds into the Tyrosine-protein phosphatase domain. Tyr20 carries the post-translational modification Phosphotyrosine. Ser50 is subject to Phosphoserine; by PKB/AKT1, CLK1 and CLK2. Tyr66 is subject to Phosphotyrosine; by EGFR. Residues Asp181 and 215–221 (CSAGIGR) contribute to the substrate site. Cys215 (phosphocysteine intermediate) is an active-site residue. At Cys215 the chain carries Cysteine persulfide. Cys215 is subject to S-nitrosocysteine; in reversibly inhibited form. Phosphoserine; by CLK1 and CLK2 occurs at positions 242 and 243. Gln262 is a substrate binding site. The interval 297-322 (EDLEPPPEHVPPPPRPPKRTLEPHNG) is disordered. 3 positions are modified to phosphoserine: Ser335, Ser362, and Ser364. A disordered region spans residues 350–402 (SRAPSIAVHSMSSMSQDTEVRKRMVGGGLQSAQASVPTEEELSPTEEEQKAHR). Thr367 is modified (phosphothreonine).

The protein belongs to the protein-tyrosine phosphatase family. Non-receptor class 1 subfamily. As to quaternary structure, interacts with EPHA3 (phosphorylated); dephosphorylates EPHA3 and may regulate its trafficking and function. Interacts with MET. Interacts with NCK1. In terms of processing, ser-50 is the major site of phosphorylation as compared to Ser-242 and Ser-243. Activated by phosphorylation at Ser-50. S-nitrosylation of Cys-215 inactivates the enzyme activity. Post-translationally, sulfhydration at Cys-215 following endoplasmic reticulum stress inactivates the enzyme activity, promoting EIF2AK3/PERK activity. In terms of tissue distribution, found in several tissues including central nervous system, liver and kidney. A high level of expression was found in the hippocampus.

It localises to the endoplasmic reticulum membrane. The catalysed reaction is O-phospho-L-tyrosyl-[protein] + H2O = L-tyrosyl-[protein] + phosphate. Functionally, tyrosine-protein phosphatase which acts as a regulator of endoplasmic reticulum unfolded protein response. Mediates dephosphorylation of EIF2AK3/PERK; inactivating the protein kinase activity of EIF2AK3/PERK. May play an important role in CKII- and p60c-src-induced signal transduction cascades. May regulate the EFNA5-EPHA3 signaling pathway which modulates cell reorganization and cell-cell repulsion. May also regulate the hepatocyte growth factor receptor signaling pathway through dephosphorylation of MET. This chain is Tyrosine-protein phosphatase non-receptor type 1 (Ptpn1), found in Rattus norvegicus (Rat).